The primary structure comprises 440 residues: Protein scalloped (440 aa).

The tract at residues 32–65 (TEQQAVGPGTIPSPWTPVNAGPPGALGSADTNGS) is disordered. The TEA DNA-binding region spans 86–162 (SADAEGVWSP…QVLARRKLRE (77 aa)).

The C-terminus of sd interacts with the C-terminal serine-rich protein domain of vg, to form a complex which acts as a selector for wing development. Interacts (via C-terminus) with yki (via N-terminus) and this interaction enhances its transcriptional activity. Subset of neuroblasts in the central nervous system and in the peripheral sense organs of the embryo. Expressed in the developing wing primordia initially along the D/V wing boundary, and by the late third larval instar, maximal expression is seen in cells at the D/V wing disk boundary. Less expression in cells located farther from this boundary. Also expressed in wing progenitor cells.

It is found in the nucleus. Transcription factor which plays a key role in the Hippo/SWH (Sav/Wts/Hpo) signaling pathway, a signaling pathway that plays a pivotal role in organ size control and tumor suppression by restricting proliferation and promoting apoptosis. The core of this pathway is composed of a kinase cascade wherein Hippo (Hpo), in complex with its regulatory protein Salvador (Sav), phosphorylates and activates Warts (Wts) in complex with its regulatory protein Mats, which in turn phosphorylates and inactivates the Yorkie (Yki) oncoprotein. The Hippo/SWH signaling pathway inhibits the activity of the transcriptional complex formed by Scalloped (sd) and Yki and the target genes of this pathway include cyclin-E (cycE), diap1 and bantam. Sd promotes nuclear localization of Yki. Involved in the regulation of cell-specific gene expression during development, particularly in the differentiation of the nervous system. When in combination with vestigial (vg) it acts as a transcriptional activation complex that regulates gene expression in the wing. Binding to vg switches the DNA target selectivity of sd. Required autonomously for cell proliferation and viability within the wing blade. Required for proper sensory organ precursor (SOP) differentiation at the wing margin; required for correct expression of sens. The protein is Protein scalloped (sd) of Drosophila melanogaster (Fruit fly).